Here is a 210-residue protein sequence, read N- to C-terminus: Calcium-activated potassium channel subunit beta-4 (210 aa).

At 1 to 19 (MAKLRVAYEYTEAEDKSIR) the chain is on the cytoplasmic side. Residues 20-40 (LGLFLIISGVVSLFIFGFCWL) traverse the membrane as a helical segment. Topologically, residues 41-167 (SPALQDLQAT…DVLLHRTHDE (127 aa)) are extracellular. 2 N-linked (GlcNAc...) asparagine glycosylation sites follow: N53 and N90. The chain crosses the membrane as a helical span at residues 168–188 (IVLLHCFLWPLVTFVVGVLIV). Residues 189 to 210 (VLTICAKSLAVKAEAMKKRKFS) lie on the Cytoplasmic side of the membrane.

It belongs to the KCNMB (TC 8.A.14.1) family. KCNMB4 subfamily. As to quaternary structure, interacts with KCNMA1 tetramer. There are probably 4 molecules of KCMNB4 per KCNMA1 tetramer. Interacts with FMR1 (via N-terminus). Post-translationally, phosphorylated. Phosphorylation modulates its effect on KCNMA1 activation kinetics. In terms of processing, N-glycosylated. A highly glycosylated form is promoted by KCNMA1. Glycosylation, which is not required for the interaction with KCNMA1 and subcellular location, increases protection against charybdotoxin. In terms of tissue distribution, predominantly expressed in brain. In brain, it is expressed in the cerebellum, cerebral cortex, medulla, spinal cord, occipital pole, frontal lobe, temporal lobe, putamen, amygdala, caudate nucleus, corpus callosum, hippocampus, substantia nigra and thalamus. Weakly or not expressed in other tissues.

The protein localises to the membrane. Its function is as follows. Regulatory subunit of the calcium activated potassium KCNMA1 (maxiK) channel. Modulates the calcium sensitivity and gating kinetics of KCNMA1, thereby contributing to KCNMA1 channel diversity. Decreases the gating kinetics and calcium sensitivity of the KCNMA1 channel, but with fast deactivation kinetics. May decrease KCNMA1 channel openings at low calcium concentrations but increases channel openings at high calcium concentrations. Makes KCNMA1 channel resistant to 100 nM charybdotoxin (CTX) toxin concentrations. This Homo sapiens (Human) protein is Calcium-activated potassium channel subunit beta-4 (KCNMB4).